Reading from the N-terminus, the 227-residue chain is Uracil-DNA glycosylase (227 aa).

Asp68 acts as the Proton acceptor in catalysis.

The protein belongs to the uracil-DNA glycosylase (UDG) superfamily. UNG family.

It is found in the cytoplasm. The enzyme catalyses Hydrolyzes single-stranded DNA or mismatched double-stranded DNA and polynucleotides, releasing free uracil.. In terms of biological role, excises uracil residues from the DNA which can arise as a result of misincorporation of dUMP residues by DNA polymerase or due to deamination of cytosine. The chain is Uracil-DNA glycosylase from Mycolicibacterium smegmatis (strain ATCC 700084 / mc(2)155) (Mycobacterium smegmatis).